A 362-amino-acid polypeptide reads, in one-letter code: DNA replication and repair protein RecF (362 aa).

30–37 (GLNAQGKS) contributes to the ATP binding site.

This sequence belongs to the RecF family.

The protein resides in the cytoplasm. Its function is as follows. The RecF protein is involved in DNA metabolism; it is required for DNA replication and normal SOS inducibility. RecF binds preferentially to single-stranded, linear DNA. It also seems to bind ATP. The chain is DNA replication and repair protein RecF from Thermoanaerobacter pseudethanolicus (strain ATCC 33223 / 39E) (Clostridium thermohydrosulfuricum).